A 299-amino-acid chain; its full sequence is Tyrosine recombinase XerC (299 aa).

The Core-binding (CB) domain maps to 1–85 (MERQLEAYCA…AVRGLYRYLN (85 aa)). One can recognise a Tyr recombinase domain in the interval 106–285 (RLPKVLDTDR…DFQHLAAVYD (180 aa)). Catalysis depends on residues Arg146, Lys170, His237, Arg240, and His263. Tyr272 acts as the O-(3'-phospho-DNA)-tyrosine intermediate in catalysis.

It belongs to the 'phage' integrase family. XerC subfamily. In terms of assembly, forms a cyclic heterotetrameric complex composed of two molecules of XerC and two molecules of XerD.

The protein localises to the cytoplasm. Site-specific tyrosine recombinase, which acts by catalyzing the cutting and rejoining of the recombining DNA molecules. The XerC-XerD complex is essential to convert dimers of the bacterial chromosome into monomers to permit their segregation at cell division. It also contributes to the segregational stability of plasmids. The protein is Tyrosine recombinase XerC of Pseudomonas putida (strain W619).